Here is a 173-residue protein sequence, read N- to C-terminus: Rubredoxin-2 (173 aa).

2 Rubredoxin-like domains span residues 2 to 53 (ASYK…FMLI) and 119 to 170 (YLKW…YVLY). Fe cation-binding residues include Cys-6, Cys-9, Cys-39, Cys-42, Cys-124, Cys-127, Cys-157, and Cys-160.

It belongs to the rubredoxin family. Fe(3+) is required as a cofactor.

The protein localises to the cytoplasm. Its pathway is hydrocarbon metabolism; alkane degradation. In terms of biological role, involved in the hydrocarbon hydroxylating system, which transfers electrons from NADH to rubredoxin reductase and then through rubredoxin to alkane 1 monooxygenase. The polypeptide is Rubredoxin-2 (alkG) (Ectopseudomonas oleovorans (Pseudomonas oleovorans)).